Consider the following 319-residue polypeptide: Taste receptor type 2 member 30 (319 aa).

Methionine 1 is a topological domain (extracellular). Residues 2 to 22 (ITFLPIIFSILIVVIFVIGNF) form a helical membrane-spanning segment. The Cytoplasmic segment spans residues 23–46 (ANGFIALVNSIEWVKRQKISFADQ). The helical transmembrane segment at 47 to 67 (ILIALAVSRVGLLWALLLHWY) threads the bilayer. The Extracellular portion of the chain corresponds to 68–86 (ATELNLAFYSVEVRITAYN). A helical transmembrane segment spans residues 87-107 (VWAVTNHFSNWLATSLSMFYL). Over 108-126 (LKIANFSNLIFLRIKRRVK) the chain is Cytoplasmic. The helical transmembrane segment at 127–147 (SVILVILLGPLLFLVCHLFVI) threads the bilayer. Residues 148–178 (NMNEIVWTKEYEGNLTWKIKLRNAVFLSNMT) are Extracellular-facing. N-linked (GlcNAc...) asparagine glycosylation is found at asparagine 161 and asparagine 176. The helical transmembrane segment at 179–199 (LTMLANFVPLTLTLISFLLLI) threads the bilayer. The Cytoplasmic segment spans residues 200–229 (CSLCKHLKKMQLHGKGSQDPSTKVHIKALQ). A helical transmembrane segment spans residues 230–250 (TVTCFLLLCAIYFLSMIISVY). Topologically, residues 251–259 (NFGRLEKKP) are extracellular. Residues 260–280 (VFMFCQAITFSYPSTHAFILI) form a helical membrane-spanning segment. Topologically, residues 281-319 (WGNKKLKQIFLSVLWHVRYWVKDRSLRLHRFTRAALCKG) are cytoplasmic.

The protein belongs to the G-protein coupled receptor T2R family.

It is found in the membrane. In terms of biological role, receptor that may play a role in the perception of bitterness and is gustducin-linked. May play a role in sensing the chemical composition of the gastrointestinal content. The activity of this receptor may stimulate alpha gustducin, mediate PLC-beta-2 activation and lead to the gating of TRPM5. This is Taste receptor type 2 member 30 (TAS2R30) from Pongo pygmaeus (Bornean orangutan).